Consider the following 348-residue polypeptide: 3-isopropylmalate dehydrogenase (348 aa).

Gly76 to Glu87 is an NAD(+) binding site. Substrate-binding residues include Arg94, Arg104, Arg132, and Asp217. Mg(2+) contacts are provided by Asp217, Asp241, and Asp245. Residue Gly275–Asn287 participates in NAD(+) binding.

It belongs to the isocitrate and isopropylmalate dehydrogenases family. LeuB type 1 subfamily. As to quaternary structure, homodimer. Requires Mg(2+) as cofactor. Mn(2+) serves as cofactor.

The protein resides in the cytoplasm. It carries out the reaction (2R,3S)-3-isopropylmalate + NAD(+) = 4-methyl-2-oxopentanoate + CO2 + NADH. It functions in the pathway amino-acid biosynthesis; L-leucine biosynthesis; L-leucine from 3-methyl-2-oxobutanoate: step 3/4. In terms of biological role, catalyzes the oxidation of 3-carboxy-2-hydroxy-4-methylpentanoate (3-isopropylmalate) to 3-carboxy-4-methyl-2-oxopentanoate. The product decarboxylates to 4-methyl-2 oxopentanoate. This Staphylococcus aureus (strain COL) protein is 3-isopropylmalate dehydrogenase.